The chain runs to 252 residues: Ubiquinone biosynthesis O-methyltransferase (252 aa).

4 residues coordinate S-adenosyl-L-methionine: arginine 41, glycine 72, aspartate 93, and methionine 136.

Belongs to the methyltransferase superfamily. UbiG/COQ3 family.

The catalysed reaction is a 3-demethylubiquinol + S-adenosyl-L-methionine = a ubiquinol + S-adenosyl-L-homocysteine + H(+). It carries out the reaction a 3-(all-trans-polyprenyl)benzene-1,2-diol + S-adenosyl-L-methionine = a 2-methoxy-6-(all-trans-polyprenyl)phenol + S-adenosyl-L-homocysteine + H(+). Its pathway is cofactor biosynthesis; ubiquinone biosynthesis. In terms of biological role, O-methyltransferase that catalyzes the 2 O-methylation steps in the ubiquinone biosynthetic pathway. The polypeptide is Ubiquinone biosynthesis O-methyltransferase (Rhizobium leguminosarum bv. trifolii (strain WSM2304)).